The primary structure comprises 260 residues: Chlorocatechol 1,2-dioxygenase (260 aa).

Fe cation-binding residues include Tyr130, Tyr164, His188, and His190.

The protein belongs to the intradiol ring-cleavage dioxygenase family. The cofactor is Fe(3+).

The catalysed reaction is 3-chlorocatechol + O2 = (2E,4Z)-2-chloromuconate + 2 H(+). It carries out the reaction 3,5-dichlorocatechol + O2 = (2E,4E)-2,4-dichloromuconate + 2 H(+). It functions in the pathway aromatic compound metabolism; 3-chlorocatechol degradation. In terms of biological role, preferentially converts 3-chlorocatechol and 3,5-dichlorocatechol as opposed to other chlorinated catechols. Retains diminished activity toward non-chlorinated substrates. The protein is Chlorocatechol 1,2-dioxygenase (clcA) of Pseudomonas putida (Arthrobacter siderocapsulatus).